A 184-amino-acid chain; its full sequence is Mitochondrial import inner membrane translocase subunit TIM22 (184 aa).

A disordered region spans residues M1–A26. Intrachain disulfides connect C40–C118 and C137–C156. The next 2 helical transmembrane spans lie at V45 to M65 and A151 to N171.

The protein belongs to the Tim17/Tim22/Tim23 family. As to quaternary structure, component of the TIM22 complex, whose core is composed of TIM22 and TIM54, associated with the 70 kDa heterohexamer composed of TIM9 and TIM10 (or TIM8 and TIM13).

It localises to the mitochondrion inner membrane. Essential core component of the TIM22 complex, a complex that mediates the import and insertion of multi-pass transmembrane proteins into the mitochondrial inner membrane. In the TIM22 complex, it constitutes the voltage-activated and signal-gated channel. Forms a twin-pore translocase that uses the membrane potential as external driving force in 2 voltage-dependent steps. This is Mitochondrial import inner membrane translocase subunit TIM22 from Candida albicans (strain SC5314 / ATCC MYA-2876) (Yeast).